A 1219-amino-acid polypeptide reads, in one-letter code: FYVE, RhoGEF and PH domain-containing protein 5 (1219 aa).

Disordered regions lie at residues 1 to 85, 94 to 113, 201 to 227, and 310 to 367; these read MGSP…SCQI, EEDF…PTES, SDTQ…GQVP, and GRES…PSSV. A compositionally biased stretch (acidic residues) spans 23–50; it reads EVFEEDSADAAEGEDQIEQEEPPNCDEE. Over residues 201 to 214 the composition is skewed to polar residues; sequence SDTQAASGTLSGYS. Over residues 319 to 337 the composition is skewed to basic and acidic residues; sequence REPEGAGLDSHRVRRKEDN. The segment covering 346–356 has biased composition (polar residues); that stretch reads SSGSFSQRSHL. The segment covering 357–367 has biased composition (low complexity); the sequence is PSSGTSTPSSV. A Phosphothreonine modification is found at T555. The span at 586–599 shows a compositional bias: low complexity; the sequence is ESKQQSSEQEAESA. The disordered stretch occupies residues 586 to 644; it reads ESKQQSSEQEAESAYTEPYKVCPISAAPREDLTSDEEQGSSEEEDSASRDPSLSHKGEG. Residues 618 to 630 are compositionally biased toward acidic residues; sequence TSDEEQGSSEEED. The span at 631–644 shows a compositional bias: basic and acidic residues; sequence SASRDPSLSHKGEG. The region spanning 647-840 is the DH domain; the sequence is RALVIAQELL…SKVTDRANES (194 aa). The PH 1 domain occupies 869 to 963; sequence EFLKEGTLMR…WHYCLSRALP (95 aa). The FYVE-type zinc finger occupies 998–1057; sequence VTHAMMCMNCGCDFSLTVRRHHCHACGKIVCRNCSRNKYPLKCLKNRMAKVCDGCFRELK. Zn(2+) is bound by residues C1004, C1007, C1020, C1023, C1028, C1031, C1049, and C1052. Residues 1120 to 1218 form the PH 2 domain; it reads GSAISGYLSR…WMEAMEDASV (99 aa).

Expressed in highly vascularized tissues, such as lung, kidney and ovary.

The protein resides in the cytoplasm. It is found in the cytoskeleton. It localises to the cell projection. Its subcellular location is the ruffle membrane. The protein localises to the endoplasmic reticulum. The protein resides in the golgi apparatus. It is found in the early endosome. Functionally, activates CDC42, a member of the Ras-like family of Rho- and Rac proteins, by exchanging bound GDP for free GTP. Mediates VEGF-induced CDC42 activation. May regulate proangiogenic action of VEGF in vascular endothelial cells, including network formation, directional movement and proliferation. May play a role in regulating the actin cytoskeleton and cell shape. The polypeptide is FYVE, RhoGEF and PH domain-containing protein 5 (Fgd5) (Mus musculus (Mouse)).